The chain runs to 204 residues: Dephospho-CoA kinase (204 aa).

The region spanning 12 to 204 (RIGVTGGIAS…AWRDQISSIC (193 aa)) is the DPCK domain. An ATP-binding site is contributed by 20-25 (ASGKSS).

This sequence belongs to the CoaE family.

Its subcellular location is the cytoplasm. It catalyses the reaction 3'-dephospho-CoA + ATP = ADP + CoA + H(+). It functions in the pathway cofactor biosynthesis; coenzyme A biosynthesis; CoA from (R)-pantothenate: step 5/5. Catalyzes the phosphorylation of the 3'-hydroxyl group of dephosphocoenzyme A to form coenzyme A. This is Dephospho-CoA kinase from Prochlorococcus marinus (strain MIT 9313).